The sequence spans 479 residues: Protein nucleotidyltransferase YdiU (479 aa).

ATP contacts are provided by glycine 83, glycine 85, arginine 86, lysine 106, aspartate 118, glycine 119, arginine 169, and arginine 176. Residue aspartate 245 is the Proton acceptor of the active site. Positions 246 and 255 each coordinate Mg(2+). ATP is bound at residue aspartate 255.

Belongs to the SELO family. Mg(2+) serves as cofactor. Mn(2+) is required as a cofactor.

The catalysed reaction is L-seryl-[protein] + ATP = 3-O-(5'-adenylyl)-L-seryl-[protein] + diphosphate. The enzyme catalyses L-threonyl-[protein] + ATP = 3-O-(5'-adenylyl)-L-threonyl-[protein] + diphosphate. It catalyses the reaction L-tyrosyl-[protein] + ATP = O-(5'-adenylyl)-L-tyrosyl-[protein] + diphosphate. It carries out the reaction L-histidyl-[protein] + UTP = N(tele)-(5'-uridylyl)-L-histidyl-[protein] + diphosphate. The catalysed reaction is L-seryl-[protein] + UTP = O-(5'-uridylyl)-L-seryl-[protein] + diphosphate. The enzyme catalyses L-tyrosyl-[protein] + UTP = O-(5'-uridylyl)-L-tyrosyl-[protein] + diphosphate. Nucleotidyltransferase involved in the post-translational modification of proteins. It can catalyze the addition of adenosine monophosphate (AMP) or uridine monophosphate (UMP) to a protein, resulting in modifications known as AMPylation and UMPylation. This Erwinia tasmaniensis (strain DSM 17950 / CFBP 7177 / CIP 109463 / NCPPB 4357 / Et1/99) protein is Protein nucleotidyltransferase YdiU.